The following is a 421-amino-acid chain: MKLLITGVSHKTAPVEVRECLAFREETLPAALADLKACEGVSEAVILSTCNRVEISLTTEDAVDPREIVDNFLSRHKAVSSASIGPHLYRHEGRDAIHHLFRVAASLDSMVVGEPQILGQLKVAYAAAKDCGALCGWLDGLMSRSFSVAKRVRSETGIGQMAVSVSYAAVELARKIFGSLTNRTVMIVGAGKMSELAARHLRRSGASHVFVTNRTHERAVDMAKLFQGTPVEYARFTAMLPEVDILIASSGAPHYILHKDEMQRVISARRNKPMFLIDIAVPRNIEPAINDLDNVFLYDIDDLQEVVNSNLRERMKEADHAELLVTEEVDRMMARMKVAEVTPVIVSLQEQLEQIRSGEMEKVRRRFGPFTAQQEEALEALTRGIINKVAHGPISELRSQAGKPDGAPAIAAIRKAFHLQD.

Residues 49–52 (TCNR), S109, 114–116 (EPQ), and Q120 contribute to the substrate site. C50 functions as the Nucleophile in the catalytic mechanism. Residue 189–194 (GAGKMS) participates in NADP(+) binding.

This sequence belongs to the glutamyl-tRNA reductase family. In terms of assembly, homodimer.

The catalysed reaction is (S)-4-amino-5-oxopentanoate + tRNA(Glu) + NADP(+) = L-glutamyl-tRNA(Glu) + NADPH + H(+). It participates in porphyrin-containing compound metabolism; protoporphyrin-IX biosynthesis; 5-aminolevulinate from L-glutamyl-tRNA(Glu): step 1/2. Its function is as follows. Catalyzes the NADPH-dependent reduction of glutamyl-tRNA(Glu) to glutamate 1-semialdehyde (GSA). In Solibacter usitatus (strain Ellin6076), this protein is Glutamyl-tRNA reductase.